A 249-amino-acid polypeptide reads, in one-letter code: tRNA (guanine-N(1)-)-methyltransferase (249 aa).

S-adenosyl-L-methionine is bound by residues Gly113 and 132–137; that span reads VGDFVV.

This sequence belongs to the RNA methyltransferase TrmD family. Homodimer.

The protein resides in the cytoplasm. It carries out the reaction guanosine(37) in tRNA + S-adenosyl-L-methionine = N(1)-methylguanosine(37) in tRNA + S-adenosyl-L-homocysteine + H(+). Its function is as follows. Specifically methylates guanosine-37 in various tRNAs. This chain is tRNA (guanine-N(1)-)-methyltransferase, found in Desulforudis audaxviator (strain MP104C).